The chain runs to 65 residues: Large ribosomal subunit protein bL35c (65 aa).

Residues 25–44 show a composition bias toward basic residues; it reads HKASKSHLLQKKSSKQRRHL. Positions 25 to 45 are disordered; that stretch reads HKASKSHLLQKKSSKQRRHLS.

It belongs to the bacterial ribosomal protein bL35 family.

It is found in the plastid. The protein resides in the chloroplast. The protein is Large ribosomal subunit protein bL35c of Pyropia yezoensis (Susabi-nori).